Reading from the N-terminus, the 96-residue chain is MKIRPLHDRVVVRRMEEERTTAGGIVIPDSATEKPTRGEIIAVGPGKVLENGDVRALAVKVGDVVLFGKYSGTEVKISGQELVVMREDDIMGVIEK.

This sequence belongs to the GroES chaperonin family. In terms of assembly, heptamer of 7 subunits arranged in a ring. Interacts with the chaperonin GroEL.

Its subcellular location is the cytoplasm. In terms of biological role, together with the chaperonin GroEL, plays an essential role in assisting protein folding. The GroEL-GroES system forms a nano-cage that allows encapsulation of the non-native substrate proteins and provides a physical environment optimized to promote and accelerate protein folding. GroES binds to the apical surface of the GroEL ring, thereby capping the opening of the GroEL channel. In Legionella micdadei (Tatlockia micdadei), this protein is Co-chaperonin GroES.